A 312-amino-acid chain; its full sequence is Borealin-2 (312 aa).

Positions 1–10 (MPPRKAPAKR) are enriched in basic residues. Positions 1–26 (MPPRKAPAKRRSTDSGVERDRGALSQ) are disordered. A compositionally biased stretch (basic and acidic residues) spans 11 to 26 (RSTDSGVERDRGALSQ).

Belongs to the borealin family. As to quaternary structure, component of the CPC complex.

The protein resides in the nucleus. It is found in the chromosome. Its subcellular location is the centromere. In terms of biological role, component of the chromosomal passenger complex (CPC), a complex that acts as a key regulator of mitosis. The CPC complex has essential functions at the centromere in ensuring correct chromosome alignment and segregation and is required for chromatin-induced microtubule stabilization and spindle assembly. This is Borealin-2 from Gallus gallus (Chicken).